A 218-amino-acid polypeptide reads, in one-letter code: Glutathione S-transferase Mu 5 (218 aa).

The 87-residue stretch at 2–88 (PMTLGYWDIR…YIARKHNLCG (87 aa)) folds into the GST N-terminal domain. Glutathione contacts are provided by residues 7 to 8 (YW), 46 to 50 (WLNEK), 59 to 60 (NL), and 72 to 73 (QS). A GST C-terminal domain is found at 90 to 207 (TEEEKIRVDI…MKSSQFLRGL (118 aa)). Tyrosine 116 is a substrate binding site.

It belongs to the GST superfamily. Mu family. In terms of assembly, homodimer.

It localises to the cytoplasm. The catalysed reaction is RX + glutathione = an S-substituted glutathione + a halide anion + H(+). In terms of biological role, conjugation of reduced glutathione to a wide number of exogenous and endogenous hydrophobic electrophiles. The protein is Glutathione S-transferase Mu 5 (GSTM5) of Homo sapiens (Human).